Here is a 345-residue protein sequence, read N- to C-terminus: tRNA-dihydrouridine(20/20a) synthase (345 aa).

FMN is bound by residues P26–L28 and Q78. The active-site Proton donor is the C108. Residues K147, H180, N220–G222, and G242–R243 each bind FMN.

The protein belongs to the Dus family. DusA subfamily. Requires FMN as cofactor.

The enzyme catalyses 5,6-dihydrouridine(20) in tRNA + NADP(+) = uridine(20) in tRNA + NADPH + H(+). It catalyses the reaction 5,6-dihydrouridine(20) in tRNA + NAD(+) = uridine(20) in tRNA + NADH + H(+). The catalysed reaction is 5,6-dihydrouridine(20a) in tRNA + NADP(+) = uridine(20a) in tRNA + NADPH + H(+). It carries out the reaction 5,6-dihydrouridine(20a) in tRNA + NAD(+) = uridine(20a) in tRNA + NADH + H(+). In terms of biological role, catalyzes the synthesis of 5,6-dihydrouridine (D), a modified base found in the D-loop of most tRNAs, via the reduction of the C5-C6 double bond in target uridines. Specifically modifies U20 and U20a in tRNAs. This Yersinia pestis protein is tRNA-dihydrouridine(20/20a) synthase.